The following is a 200-amino-acid chain: Rho GDP-dissociation inhibitor 2 (200 aa).

The tract at residues 1 to 40 (MTEKAPEPHVEEDDDELDGKLNYKPPPQKSLKELQEMDKD) is disordered. The residue at position 2 (T2) is an N-acetylthreonine. K20 is modified (N6-acetyllysine). A Phosphotyrosine modification is found at Y23. K24, K39, K46, K101, and K123 each carry N6-acetyllysine. The segment covering 30–40 (SLKELQEMDKD) has biased composition (basic and acidic residues). S144 carries the post-translational modification Phosphoserine. An N6-acetyllysine modification is found at K174.

Belongs to the Rho GDI family. In terms of assembly, interacts with RHOA. Interacts with RAC1. Interacts with RAC2. Interacts with CDC42.

It localises to the cytoplasm. The protein resides in the cytosol. In terms of biological role, regulates the GDP/GTP exchange reaction of the Rho proteins by inhibiting the dissociation of GDP from them, and the subsequent binding of GTP to them. Regulates reorganization of the actin cytoskeleton mediated by Rho family members. The chain is Rho GDP-dissociation inhibitor 2 (ARHGDIB) from Bos taurus (Bovine).